The chain runs to 99 residues: Large ribosomal subunit protein uL23 (99 aa).

It belongs to the universal ribosomal protein uL23 family. Part of the 50S ribosomal subunit. Contacts protein L29, and trigger factor when it is bound to the ribosome.

Its function is as follows. One of the early assembly proteins it binds 23S rRNA. One of the proteins that surrounds the polypeptide exit tunnel on the outside of the ribosome. Forms the main docking site for trigger factor binding to the ribosome. The sequence is that of Large ribosomal subunit protein uL23 from Agathobacter rectalis (strain ATCC 33656 / DSM 3377 / JCM 17463 / KCTC 5835 / VPI 0990) (Eubacterium rectale).